Reading from the N-terminus, the 383-residue chain is Mannan endo-1,4-beta-mannosidase A (383 aa).

The first 18 residues, 1–18, serve as a signal peptide directing secretion; sequence MKFSQALLSLASLALAAA. Asn75 carries N-linked (GlcNAc...) asparagine glycosylation. Substrate is bound at residue Trp97. A glycan (N-linked (GlcNAc...) asparagine) is linked at Asn199. Substrate-binding positions include Asn210 and 211–213; that span reads EPR. The Proton donor/acceptor role is filled by Glu211. A disulfide bridge links Cys214 with Cys217. Residues Tyr279 and Trp283 each contribute to the substrate site. Cys301 and Cys308 form a disulfide bridge. Catalysis depends on Glu312, which acts as the Nucleophile. Cys320 and Cys369 are disulfide-bonded. The N-linked (GlcNAc...) asparagine glycan is linked to Asn332. Residue Trp342 coordinates substrate.

Belongs to the glycosyl hydrolase 5 (cellulase A) family. As to quaternary structure, monomer.

Its subcellular location is the secreted. It carries out the reaction Random hydrolysis of (1-&gt;4)-beta-D-mannosidic linkages in mannans, galactomannans and glucomannans.. Its function is as follows. Endo-1,4-mannanase that catalyzes the random hydrolysis of (1-&gt;4)-beta-D-mannosidic linkages in mannans and heteromannans. It is a crucial enzyme for depolymerization of seed galactomannans and wood galactoglucomannans. Active against locust bean gum and gum guar. Also has transglycosylation activity. The chain is Mannan endo-1,4-beta-mannosidase A (manA) from Emericella nidulans (strain FGSC A4 / ATCC 38163 / CBS 112.46 / NRRL 194 / M139) (Aspergillus nidulans).